An 88-amino-acid chain; its full sequence is Small ribosomal subunit protein uS15 (88 aa).

It belongs to the universal ribosomal protein uS15 family. As to quaternary structure, part of the 30S ribosomal subunit. Forms a bridge to the 50S subunit in the 70S ribosome, contacting the 23S rRNA.

Its function is as follows. One of the primary rRNA binding proteins, it binds directly to 16S rRNA where it helps nucleate assembly of the platform of the 30S subunit by binding and bridging several RNA helices of the 16S rRNA. In terms of biological role, forms an intersubunit bridge (bridge B4) with the 23S rRNA of the 50S subunit in the ribosome. This is Small ribosomal subunit protein uS15 from Polaromonas sp. (strain JS666 / ATCC BAA-500).